The sequence spans 320 residues: Glutaminase (320 aa).

Positions 70, 121, 165, 172, 196, 248, and 266 each coordinate substrate.

Belongs to the glutaminase family. Homotetramer.

It carries out the reaction L-glutamine + H2O = L-glutamate + NH4(+). The chain is Glutaminase from Mycobacterium marinum (strain ATCC BAA-535 / M).